The chain runs to 55 residues: Large ribosomal subunit protein bL33 (55 aa).

It belongs to the bacterial ribosomal protein bL33 family.

The protein is Large ribosomal subunit protein bL33 of Clavibacter sepedonicus (Clavibacter michiganensis subsp. sepedonicus).